A 420-amino-acid polypeptide reads, in one-letter code: 3-isopropylmalate dehydratase large subunit (420 aa).

[4Fe-4S] cluster-binding residues include Cys300, Cys360, and Cys363.

Belongs to the aconitase/IPM isomerase family. LeuC type 2 subfamily. Heterodimer of LeuC and LeuD. The cofactor is [4Fe-4S] cluster.

The enzyme catalyses (2R,3S)-3-isopropylmalate = (2S)-2-isopropylmalate. Its pathway is amino-acid biosynthesis; L-leucine biosynthesis; L-leucine from 3-methyl-2-oxobutanoate: step 2/4. In terms of biological role, catalyzes the isomerization between 2-isopropylmalate and 3-isopropylmalate, via the formation of 2-isopropylmaleate. The polypeptide is 3-isopropylmalate dehydratase large subunit (Helicobacter hepaticus (strain ATCC 51449 / 3B1)).